The sequence spans 460 residues: Notoamide biosynthesis cluster transcriptional coactivator notR (460 aa).

Residues 74 to 145 (LQDLARQVEI…EPMPNYVSHT (72 aa)) form the HTH iclR-type domain. The H-T-H motif DNA-binding region spans 107–126 (IQDLADLAGVPDIQLRRVIR). A disordered region spans residues 300–320 (TRDFTPQPESSPRPGSASSRV).

The protein localises to the nucleus. Transcription factor that probably regulates the expression of the gene cluster that mediates the biosynthesis of notoamide, a fungal indole alkaloid that belongs to a family of natural products containing a characteristic bicyclo[2.2.2]diazaoctane core. This Aspergillus sp. (strain MF297-2) protein is Notoamide biosynthesis cluster transcriptional coactivator notR.